Consider the following 491-residue polypeptide: Putative pentatricopeptide repeat-containing protein At1g02420 (491 aa).

PPR repeat units follow at residues 179–209 (DTAC…LKHQ), 210–244 (FQPD…GLKP), 245–279 (DVVT…EETP), 280–314 (DVIT…GCYP), 315–349 (DVAA…GLSP), 350–384 (NATT…ECLP), 385–419 (NTQS…GFGS), and 420–454 (YSLV…GHRP).

It belongs to the PPR family. P subfamily.

The sequence is that of Putative pentatricopeptide repeat-containing protein At1g02420 from Arabidopsis thaliana (Mouse-ear cress).